Consider the following 446-residue polypeptide: Probable glycine dehydrogenase (decarboxylating) subunit 1 (446 aa).

Belongs to the GcvP family. N-terminal subunit subfamily. The glycine cleavage system is composed of four proteins: P, T, L and H. In this organism, the P 'protein' is a heterodimer of two subunits.

The enzyme catalyses N(6)-[(R)-lipoyl]-L-lysyl-[glycine-cleavage complex H protein] + glycine + H(+) = N(6)-[(R)-S(8)-aminomethyldihydrolipoyl]-L-lysyl-[glycine-cleavage complex H protein] + CO2. Functionally, the glycine cleavage system catalyzes the degradation of glycine. The P protein binds the alpha-amino group of glycine through its pyridoxal phosphate cofactor; CO(2) is released and the remaining methylamine moiety is then transferred to the lipoamide cofactor of the H protein. This Xanthobacter autotrophicus (strain ATCC BAA-1158 / Py2) protein is Probable glycine dehydrogenase (decarboxylating) subunit 1.